The sequence spans 170 residues: Adenine phosphoribosyltransferase (170 aa).

It belongs to the purine/pyrimidine phosphoribosyltransferase family. In terms of assembly, homodimer.

The protein resides in the cytoplasm. It catalyses the reaction AMP + diphosphate = 5-phospho-alpha-D-ribose 1-diphosphate + adenine. The protein operates within purine metabolism; AMP biosynthesis via salvage pathway; AMP from adenine: step 1/1. Its function is as follows. Catalyzes a salvage reaction resulting in the formation of AMP, that is energically less costly than de novo synthesis. This is Adenine phosphoribosyltransferase from Geobacillus sp. (strain WCH70).